Consider the following 431-residue polypeptide: Histidinol dehydrogenase (431 aa).

NAD(+) is bound by residues Y127, Q185, and N208. Substrate-binding residues include S234, Q256, and H259. Positions 256 and 259 each coordinate Zn(2+). Catalysis depends on proton acceptor residues E323 and H324. Positions 324, 357, 411, and 416 each coordinate substrate. Residue D357 participates in Zn(2+) binding. H416 is a Zn(2+) binding site.

The protein belongs to the histidinol dehydrogenase family. Zn(2+) serves as cofactor.

The enzyme catalyses L-histidinol + 2 NAD(+) + H2O = L-histidine + 2 NADH + 3 H(+). The protein operates within amino-acid biosynthesis; L-histidine biosynthesis; L-histidine from 5-phospho-alpha-D-ribose 1-diphosphate: step 9/9. Its function is as follows. Catalyzes the sequential NAD-dependent oxidations of L-histidinol to L-histidinaldehyde and then to L-histidine. This Vibrio cholerae serotype O1 (strain ATCC 39315 / El Tor Inaba N16961) protein is Histidinol dehydrogenase.